A 240-amino-acid chain; its full sequence is Ribosomal RNA small subunit methyltransferase I (240 aa).

This sequence belongs to the methyltransferase superfamily. RsmI family.

It is found in the cytoplasm. It carries out the reaction cytidine(1402) in 16S rRNA + S-adenosyl-L-methionine = 2'-O-methylcytidine(1402) in 16S rRNA + S-adenosyl-L-homocysteine + H(+). Its function is as follows. Catalyzes the 2'-O-methylation of the ribose of cytidine 1402 (C1402) in 16S rRNA. This is Ribosomal RNA small subunit methyltransferase I from Leptospira biflexa serovar Patoc (strain Patoc 1 / ATCC 23582 / Paris).